The sequence spans 62 residues: Large ribosomal subunit protein bL32 (62 aa).

A compositionally biased stretch (basic residues) spans 1–16 (MAVPKRKTSPSRRGMR). A disordered region spans residues 1–62 (MAVPKRKTSP…QILKPKTAEV (62 aa)). The segment covering 28–44 (VEDKDSGELRRPHHLDL) has biased composition (basic and acidic residues).

It belongs to the bacterial ribosomal protein bL32 family.

This is Large ribosomal subunit protein bL32 from Azorhizobium caulinodans (strain ATCC 43989 / DSM 5975 / JCM 20966 / LMG 6465 / NBRC 14845 / NCIMB 13405 / ORS 571).